Reading from the N-terminus, the 294-residue chain is Gene 15 protein (294 aa).

In Mycobacterium phage L5 (Mycobacteriophage L5), this protein is Gene 15 protein (15).